Here is a 1352-residue protein sequence, read N- to C-terminus: Stress response protein NST1 (1352 aa).

A compositionally biased stretch (polar residues) spans 1-12 (MSSKSQQPPTGL). 9 disordered regions span residues 1–66 (MSSK…FFNF), 216–422 (NANA…TQSS), 503–522 (NGLR…VEVD), 531–616 (DHRA…FLSF), 651–693 (RRSV…AEEG), 726–880 (LREL…IAKE), 978–1118 (GLKS…DDAF), 1139–1275 (GSLI…GAGV), and 1307–1336 (GGTA…HQQQ). Over residues 16-25 (AAKKRAKKAA) the composition is skewed to basic residues. The segment covering 26–45 (KQSQNPQPQSAPQTSSQTPA) has biased composition (low complexity). A compositionally biased stretch (pro residues) spans 46–59 (SVPPLPPASVPDPL). Over residues 218-229 (NARSFPSPQQTI) the composition is skewed to polar residues. Over residues 242–254 (REEEYDDEEEIEE) the composition is skewed to acidic residues. The segment covering 268-277 (KKNKKKKKKG) has biased composition (basic residues). Over residues 287–300 (VEPPAPLPPLPPPS) the composition is skewed to pro residues. The segment covering 317–330 (LPTHQPQPLSQQPP) has biased composition (low complexity). The span at 331-349 (SLNPLPPPAPASAPTPTPP) shows a compositional bias: pro residues. Low complexity predominate over residues 368–388 (PARSARAAGKAPASAAPPHNA). The span at 531-541 (DHRAPELHDHD) shows a compositional bias: basic and acidic residues. Positions 542–583 (PDDLDGEESEEYDDDDDYADDDELDDDDIGTDEADVGDEIDE) are enriched in acidic residues. Positions 653–664 (SVREEQNLRDMQ) are enriched in basic and acidic residues. The span at 665-680 (EETDEEEEEEDDDESR) shows a compositional bias: acidic residues. Composition is skewed to basic and acidic residues over residues 681–693 (DEPM…AEEG), 726–749 (LREL…EAQK), and 759–880 (QKAE…IAKE). The stretch at 712-943 (AYRERVAKQR…AAQQAQRERA (232 aa)) forms a coiled coil. The span at 1008–1020 (TNATPGRSMQKTP) shows a compositional bias: polar residues. Pro residues predominate over residues 1153 to 1164 (PTPPAPIAPPNL). 2 stretches are compositionally biased toward polar residues: residues 1173 to 1186 (SDGQ…LRST) and 1208 to 1219 (QPQQRRPTTSWD).

Belongs to the NST1 family.

Its subcellular location is the cytoplasm. Its function is as follows. May act as a negative regulator of salt tolerance. This chain is Stress response protein NST1 (NST1), found in Cryptococcus neoformans var. neoformans serotype D (strain JEC21 / ATCC MYA-565) (Filobasidiella neoformans).